Reading from the N-terminus, the 445-residue chain is Probable D-serine dehydratase (445 aa).

Lys111 carries the post-translational modification N6-(pyridoxal phosphate)lysine.

Belongs to the serine/threonine dehydratase family. DsdA subfamily. The cofactor is pyridoxal 5'-phosphate.

The catalysed reaction is D-serine = pyruvate + NH4(+). This Burkholderia pseudomallei (strain 668) protein is Probable D-serine dehydratase.